We begin with the raw amino-acid sequence, 354 residues long: L-Lys-D/L-Arg epimerase (354 aa).

Substrate-binding positions include Thr135 and 160–162 (KIK). 3 residues coordinate Mg(2+): Asp190, Glu215, and Asp240. Substrate is bound by residues Lys265, Asp295, and 318-320 (DLD).

The protein belongs to the mandelate racemase/muconate lactonizing enzyme family. The cofactor is Mg(2+).

In terms of biological role, catalyzes the epimerization of L-Lys-L-Arg to L-Lys-D-Arg (in vitro). Catalyzes the epimerization of positively charged dipeptides, with a preference for substrates with a basic amino acid in the second position. Has epimerase activity with L-Lys-L-Lys, L-Arg-L-Arg, L-Val-L-Arg, L-Val-L-Lys and L-Ala-L-Arg (in vitro). In Desulforapulum autotrophicum (strain ATCC 43914 / DSM 3382 / VKM B-1955 / HRM2) (Desulfobacterium autotrophicum), this protein is L-Lys-D/L-Arg epimerase.